Consider the following 530-residue polypeptide: Bifunctional purine biosynthesis protein PurH (530 aa).

Residues 2 to 150 (TDHPRRVTRA…KNHDDVAVVV (149 aa)) form the MGS-like domain.

It belongs to the PurH family.

The enzyme catalyses (6R)-10-formyltetrahydrofolate + 5-amino-1-(5-phospho-beta-D-ribosyl)imidazole-4-carboxamide = 5-formamido-1-(5-phospho-D-ribosyl)imidazole-4-carboxamide + (6S)-5,6,7,8-tetrahydrofolate. It catalyses the reaction IMP + H2O = 5-formamido-1-(5-phospho-D-ribosyl)imidazole-4-carboxamide. Its pathway is purine metabolism; IMP biosynthesis via de novo pathway; 5-formamido-1-(5-phospho-D-ribosyl)imidazole-4-carboxamide from 5-amino-1-(5-phospho-D-ribosyl)imidazole-4-carboxamide (10-formyl THF route): step 1/1. The protein operates within purine metabolism; IMP biosynthesis via de novo pathway; IMP from 5-formamido-1-(5-phospho-D-ribosyl)imidazole-4-carboxamide: step 1/1. The sequence is that of Bifunctional purine biosynthesis protein PurH from Bradyrhizobium diazoefficiens (strain JCM 10833 / BCRC 13528 / IAM 13628 / NBRC 14792 / USDA 110).